A 290-amino-acid chain; its full sequence is Pyridoxal kinase PdxY (290 aa).

Substrate-binding positions include Ser-12 and 47–48 (TQ). ATP is bound by residues Asp-114, Glu-151, Lys-184, and 211–214 (RPLL). Residue Asp-225 coordinates substrate.

The protein belongs to the pyridoxine kinase family. PdxY subfamily. As to quaternary structure, homodimer. The cofactor is Mg(2+).

The enzyme catalyses pyridoxal + ATP = pyridoxal 5'-phosphate + ADP + H(+). The protein operates within cofactor metabolism; pyridoxal 5'-phosphate salvage; pyridoxal 5'-phosphate from pyridoxal: step 1/1. In terms of biological role, pyridoxal kinase involved in the salvage pathway of pyridoxal 5'-phosphate (PLP). Catalyzes the phosphorylation of pyridoxal to PLP. In Pseudomonas putida (strain W619), this protein is Pyridoxal kinase PdxY.